The sequence spans 44 residues: MRDIKTYLSVAPVLTTLWFGSLAGLLIEINRLFPDALVFPFFSF.

The chain crosses the membrane as a helical span at residues 7 to 27; that stretch reads YLSVAPVLTTLWFGSLAGLLI.

Belongs to the PsaJ family.

The protein localises to the plastid. The protein resides in the chloroplast thylakoid membrane. In terms of biological role, may help in the organization of the PsaE and PsaF subunits. This Liriodendron tulipifera (Tuliptree) protein is Photosystem I reaction center subunit IX.